We begin with the raw amino-acid sequence, 207 residues long: Ribosomal RNA small subunit methyltransferase G (207 aa).

S-adenosyl-L-methionine is bound by residues Gly-73, Leu-78, 124–125 (VE), and Arg-139.

It belongs to the methyltransferase superfamily. RNA methyltransferase RsmG family.

It is found in the cytoplasm. The catalysed reaction is guanosine(527) in 16S rRNA + S-adenosyl-L-methionine = N(7)-methylguanosine(527) in 16S rRNA + S-adenosyl-L-homocysteine. Its function is as follows. Specifically methylates the N7 position of guanine in position 527 of 16S rRNA. The chain is Ribosomal RNA small subunit methyltransferase G from Escherichia coli O17:K52:H18 (strain UMN026 / ExPEC).